The primary structure comprises 474 residues: ATP synthase subunit beta (474 aa).

Residue 153–160 participates in ATP binding; that stretch reads GGAGVGKT.

Belongs to the ATPase alpha/beta chains family. As to quaternary structure, F-type ATPases have 2 components, CF(1) - the catalytic core - and CF(0) - the membrane proton channel. CF(1) has five subunits: alpha(3), beta(3), gamma(1), delta(1), epsilon(1). CF(0) has three main subunits: a(1), b(2) and c(9-12). The alpha and beta chains form an alternating ring which encloses part of the gamma chain. CF(1) is attached to CF(0) by a central stalk formed by the gamma and epsilon chains, while a peripheral stalk is formed by the delta and b chains.

The protein localises to the cell inner membrane. The catalysed reaction is ATP + H2O + 4 H(+)(in) = ADP + phosphate + 5 H(+)(out). Its function is as follows. Produces ATP from ADP in the presence of a proton gradient across the membrane. The catalytic sites are hosted primarily by the beta subunits. In Neorickettsia sennetsu (strain ATCC VR-367 / Miyayama) (Ehrlichia sennetsu), this protein is ATP synthase subunit beta.